The following is a 385-amino-acid chain: MSWRLLTGYQLCRLRLFRKPQPALKIRPSSVCVTYGTDCQSNKENKRTVETLRACSVDIGKICRLKGWVLLEEETYAEEIANILKELGANQTVIASILERCPEAIVCSPAAVNTKRKLWQMVCKTKTELIQLIEQFPESFFAVKDQENQKLNVQFFQELGLKNVVITRFLTTASSIFHNPVENNKQMIGVLLESYLNLGGSEANAKVWLLKLLSQNPFIVLSSPTAVGEVLKFLQGQGFTDSEVLQLLSKLKGFLFQLQPGSIQNSISFTKTTFECTDHDLRQLVVKCPALLYYPAPVLEERIQALLKEGISVAQIRASPMVLELTPQIIQYRIRKLNSLGYGIKDGHLASLNGTKKEFEANFSKMQAKQGRPLFNPVASLKVEE.

The transit peptide at 1-35 directs the protein to the mitochondrion; the sequence is MSWRLLTGYQLCRLRLFRKPQPALKIRPSSVCVTY.

The protein belongs to the mTERF family. As to quaternary structure, monomer.

It is found in the mitochondrion matrix. The protein localises to the mitochondrion nucleoid. Its function is as follows. Binds mitochondrial DNA and plays a role in the regulation of transcription of mitochondrial mRNA and rRNA species. The protein is Transcription termination factor 2, mitochondrial (Mterf2) of Rattus norvegicus (Rat).